Here is a 383-residue protein sequence, read N- to C-terminus: Bifunctional enzyme IspD/IspF (383 aa).

A 2-C-methyl-D-erythritol 4-phosphate cytidylyltransferase region spans residues 1 to 226; it reads MKIAAVIVAA…ERQIMSETIT (226 aa). A 2-C-methyl-D-erythritol 2,4-cyclodiphosphate synthase region spans residues 227-383; the sequence is VTGQGYDVHR…QAIVTARLTT (157 aa). Positions 233 and 235 each coordinate a divalent metal cation. Residues 233-235 and 259-260 contribute to the 4-CDP-2-C-methyl-D-erythritol 2-phosphate site; these read DVH and HS. An a divalent metal cation-binding site is contributed by His-267. 4-CDP-2-C-methyl-D-erythritol 2-phosphate is bound by residues 281–283, 357–360, Phe-364, and Arg-367; these read DIG and TTTE.

It in the N-terminal section; belongs to the IspD/TarI cytidylyltransferase family. IspD subfamily. In the C-terminal section; belongs to the IspF family. A divalent metal cation is required as a cofactor.

The catalysed reaction is 2-C-methyl-D-erythritol 4-phosphate + CTP + H(+) = 4-CDP-2-C-methyl-D-erythritol + diphosphate. The enzyme catalyses 4-CDP-2-C-methyl-D-erythritol 2-phosphate = 2-C-methyl-D-erythritol 2,4-cyclic diphosphate + CMP. It functions in the pathway isoprenoid biosynthesis; isopentenyl diphosphate biosynthesis via DXP pathway; isopentenyl diphosphate from 1-deoxy-D-xylulose 5-phosphate: step 2/6. It participates in isoprenoid biosynthesis; isopentenyl diphosphate biosynthesis via DXP pathway; isopentenyl diphosphate from 1-deoxy-D-xylulose 5-phosphate: step 4/6. Its function is as follows. Bifunctional enzyme that catalyzes the formation of 4-diphosphocytidyl-2-C-methyl-D-erythritol from CTP and 2-C-methyl-D-erythritol 4-phosphate (MEP) (IspD), and catalyzes the conversion of 4-diphosphocytidyl-2-C-methyl-D-erythritol 2-phosphate (CDP-ME2P) to 2-C-methyl-D-erythritol 2,4-cyclodiphosphate (ME-CPP) with a corresponding release of cytidine 5-monophosphate (CMP) (IspF). This Maricaulis maris (strain MCS10) (Caulobacter maris) protein is Bifunctional enzyme IspD/IspF.